Here is a 520-residue protein sequence, read N- to C-terminus: Cytochrome P450 6d3 (520 aa).

Residue cysteine 461 coordinates heme.

It belongs to the cytochrome P450 family. It depends on heme as a cofactor.

The protein localises to the endoplasmic reticulum membrane. It is found in the microsome membrane. Functionally, metabolizes pyrethroid insecticides and other xenobiotics. The chain is Cytochrome P450 6d3 (CYP6D3) from Musca domestica (House fly).